We begin with the raw amino-acid sequence, 574 residues long: Isocitrate dehydrogenase kinase/phosphatase (574 aa).

ATP-binding positions include 311 to 317 (APGIRGM) and lysine 332. Residue aspartate 367 is part of the active site.

It belongs to the AceK family.

It localises to the cytoplasm. It catalyses the reaction L-seryl-[isocitrate dehydrogenase] + ATP = O-phospho-L-seryl-[isocitrate dehydrogenase] + ADP + H(+). Bifunctional enzyme which can phosphorylate or dephosphorylate isocitrate dehydrogenase (IDH) on a specific serine residue. This is a regulatory mechanism which enables bacteria to bypass the Krebs cycle via the glyoxylate shunt in response to the source of carbon. When bacteria are grown on glucose, IDH is fully active and unphosphorylated, but when grown on acetate or ethanol, the activity of IDH declines drastically concomitant with its phosphorylation. This Shigella boydii serotype 4 (strain Sb227) protein is Isocitrate dehydrogenase kinase/phosphatase.